Here is a 152-residue protein sequence, read N- to C-terminus: Large ribosomal subunit protein uL15 (152 aa).

Positions 1 to 66 (MLQLHTIKPN…PLHRRLPKKG (66 aa)) are disordered. Positions 24 to 36 (ESSGLGKTCGKGN) are enriched in gly residues.

It belongs to the universal ribosomal protein uL15 family. In terms of assembly, part of the 50S ribosomal subunit.

Its function is as follows. Binds to the 23S rRNA. The chain is Large ribosomal subunit protein uL15 from Akkermansia muciniphila (strain ATCC BAA-835 / DSM 22959 / JCM 33894 / BCRC 81048 / CCUG 64013 / CIP 107961 / Muc).